Here is a 125-residue protein sequence, read N- to C-terminus: MALTKLGNPEAKADRSLETFPIDDTSQEIRIDCREFTCRCPITGQPDWATIRIDYRPGGRGLETKSLKLYLETFREEGIFHEHLATLIRDDLVAALAPVQLTVTVNFNARGGIALAASSTYRREA.

Cysteine 40 functions as the Thioimide intermediate in the catalytic mechanism. Aspartate 47 functions as the Proton donor in the catalytic mechanism. Substrate is bound by residues 62–64 (LET) and 81–82 (HE).

It belongs to the GTP cyclohydrolase I family. QueF type 1 subfamily.

It is found in the cytoplasm. It catalyses the reaction 7-aminomethyl-7-carbaguanine + 2 NADP(+) = 7-cyano-7-deazaguanine + 2 NADPH + 3 H(+). It functions in the pathway tRNA modification; tRNA-queuosine biosynthesis. Catalyzes the NADPH-dependent reduction of 7-cyano-7-deazaguanine (preQ0) to 7-aminomethyl-7-deazaguanine (preQ1). This chain is NADPH-dependent 7-cyano-7-deazaguanine reductase, found in Frankia casuarinae (strain DSM 45818 / CECT 9043 / HFP020203 / CcI3).